Here is a 436-residue protein sequence, read N- to C-terminus: Enolase (436 aa).

Position 167 (Gln167) interacts with (2R)-2-phosphoglycerate. Glu209 (proton donor) is an active-site residue. Residues Asp246, Glu291, and Asp318 each coordinate Mg(2+). Residues Lys343, Arg372, Ser373, and Lys394 each contribute to the (2R)-2-phosphoglycerate site. Residue Lys343 is the Proton acceptor of the active site.

The protein belongs to the enolase family. Component of the RNA degradosome, a multiprotein complex involved in RNA processing and mRNA degradation. The cofactor is Mg(2+).

The protein localises to the cytoplasm. The protein resides in the secreted. Its subcellular location is the cell surface. The enzyme catalyses (2R)-2-phosphoglycerate = phosphoenolpyruvate + H2O. It functions in the pathway carbohydrate degradation; glycolysis; pyruvate from D-glyceraldehyde 3-phosphate: step 4/5. Its function is as follows. Catalyzes the reversible conversion of 2-phosphoglycerate (2-PG) into phosphoenolpyruvate (PEP). It is essential for the degradation of carbohydrates via glycolysis. This chain is Enolase, found in Haemophilus influenzae (strain 86-028NP).